Here is a 757-residue protein sequence, read N- to C-terminus: Elongation factor G, mitochondrial (757 aa).

The transit peptide at 1–41 (MLERAALLHRLRLPAHSLPFIYNGALFGGAKRSFSATSKRC) directs the protein to the mitochondrion. The tr-type G domain maps to 66 to 347 (KLLRNIGVSA…AIVDYLPEPS (282 aa)). GTP is bound by residues 75–82 (AHIDSGKT), 146–150 (DTPGH), and 200–203 (NKMD).

This sequence belongs to the TRAFAC class translation factor GTPase superfamily. Classic translation factor GTPase family. EF-G/EF-2 subfamily.

It is found in the mitochondrion. It functions in the pathway protein biosynthesis; polypeptide chain elongation. Its function is as follows. Mitochondrial GTPase that catalyzes the GTP-dependent ribosomal translocation step during translation elongation. During this step, the ribosome changes from the pre-translocational (PRE) to the post-translocational (POST) state as the newly formed A-site-bound peptidyl-tRNA and P-site-bound deacylated tRNA move to the P and E sites, respectively. Catalyzes the coordinated movement of the two tRNA molecules, the mRNA and conformational changes in the ribosome. The chain is Elongation factor G, mitochondrial from Eremothecium gossypii (strain ATCC 10895 / CBS 109.51 / FGSC 9923 / NRRL Y-1056) (Yeast).